Reading from the N-terminus, the 511-residue chain is Maturase K (511 aa).

It belongs to the intron maturase 2 family. MatK subfamily.

It localises to the plastid. Its subcellular location is the chloroplast. Its function is as follows. Usually encoded in the trnK tRNA gene intron. Probably assists in splicing its own and other chloroplast group II introns. The protein is Maturase K of Hordeum murinum subsp. leporinum (Mouse barley).